Consider the following 573-residue polypeptide: Globulin-1 S allele (573 aa).

The or 21 signal peptide spans 1–18; it reads MVSARIVVLLAVLLCAAA. Residues 19 to 86 constitute a propeptide that is removed on maturation; sequence AVASSWEDDN…DRSGEGSSED (68 aa). Residues 65–102 are disordered; sequence EKRQERSRHEADDRSGEGSSEDEREREQEKEEKQKDRR. 2 Cupin type-1 domains span residues 104 to 262 and 311 to 493; these read YVFD…DRLE and YSLL…EEVD. The disordered stretch occupies residues 288 to 315; the sequence is RHASEGGHGPHWPLPPFGESRGPYSLLD. Residue asparagine 349 is glycosylated (N-linked (GlcNAc...) asparagine). 2 disordered regions span residues 382-416 and 498-573; these read PHRQSQGGESERERGKGRRSEEEEESSEEQEEVGQ and SRRE…TARM. The segment covering 390 to 402 has biased composition (basic and acidic residues); the sequence is ESERERGKGRRSE. The span at 403–413 shows a compositional bias: acidic residues; sequence EEEESSEEQEE. Composition is skewed to basic and acidic residues over residues 525–542 and 549–561; these read EERHGGRGERERHGREER and REGRHGRGRREEV.

This sequence belongs to the 7S seed storage protein family. In terms of processing, three protein-processing steps occur in the formation of the mature protein from the primary translation product.

The chain is Globulin-1 S allele (GLB1) from Zea mays (Maize).